The chain runs to 461 residues: MVRELLEKARGLSIYTAYNTNVDAIVYLNGETVQRLIDEFGADAVRKRMEDYPREINEPLDFVARLVHALKTGKPMAVPLVNEELHTWFDSHFRYDVERMGGQAGIIANLLSNLDFREVIVYTPHLAKRQAEMFVRKPNLFYPVVEGGRLVLKHPWEAYREGDPVKVNRIFEFRAGTAFKLGDERIVVPFSGRFIVSARFESIRIYTEPGLRPFLPEIGERVDGAILSGYQGINLRYSDGKDANYYLRKAKEDIMLLKREKDLKVHLEFASIQSRELRKKVIYNLFPLADSVGMDEAEIAYVLSALGYDELADRIFTYNRIEDTVLGGKILLDEMNLDVLQIHTIYYIMYITHADNPLSEEELRRSLELATTLAASRASLGDITSPDQIEIGLRVPYNERGEYVKLRFEEAKRKLRTKEYKLVIIPTRLVQNPVSTVGLGDTISTGAFASYLAMLKEKGEL.

Positions 1 to 457 (MVRELLEKAR…FASYLAMLKE (457 aa)) constitute an ADPK domain. Mg(2+)-binding residues include Glu268, Glu298, and Asp441. Catalysis depends on Asp441, which acts as the Proton acceptor.

It belongs to the carbohydrate kinase PfkC family. Requires Mg(2+) as cofactor.

The protein resides in the cytoplasm. It catalyses the reaction beta-D-fructose 6-phosphate + ADP = beta-D-fructose 1,6-bisphosphate + AMP + H(+). It participates in carbohydrate degradation; glycolysis. Functionally, catalyzes the phosphorylation of fructose 6-phosphate to fructose 1,6-bisphosphate using ADP as the phosphate donor. The chain is ADP-specific phosphofructokinase from Thermococcus zilligii.